The chain runs to 365 residues: MTDPSQVKPKHVMMMAAGTGGHVFPALAVAKQLQQHGCQVSWLATPAGMENRLLKDQNIPIYQIDIQGVRGNGAVRKLLAPFKILKATYSAMRYMKQLKVDAVAGFGGYVAGPGGLAARILGIPILIHEQNAVAGFTNTQLARVASKVCEAFPNTFPASAKRVTTGNPVRKEITAILSPKWRYDSREQAGQPLNILIVGGSLGAQALNERLPDALKNLNLPLNVFHQCGQKQFEETRVRYTNAPANMSVQVMPFIEDMAQAYRDADLIICRAGALTVTEVATAGVAAVFVPLPIAVDDHQTANARFLADVGAAKICQQSTMTPENLDALLKPLMNRQLLSEMAVKARQHAQPNATQHVVDLIQTL.

Residues 19 to 21 (TGG), asparagine 131, arginine 170, serine 201, isoleucine 255, 274 to 279 (ALTVTE), and glutamine 300 contribute to the UDP-N-acetyl-alpha-D-glucosamine site.

Belongs to the glycosyltransferase 28 family. MurG subfamily.

It is found in the cell inner membrane. It carries out the reaction di-trans,octa-cis-undecaprenyl diphospho-N-acetyl-alpha-D-muramoyl-L-alanyl-D-glutamyl-meso-2,6-diaminopimeloyl-D-alanyl-D-alanine + UDP-N-acetyl-alpha-D-glucosamine = di-trans,octa-cis-undecaprenyl diphospho-[N-acetyl-alpha-D-glucosaminyl-(1-&gt;4)]-N-acetyl-alpha-D-muramoyl-L-alanyl-D-glutamyl-meso-2,6-diaminopimeloyl-D-alanyl-D-alanine + UDP + H(+). It participates in cell wall biogenesis; peptidoglycan biosynthesis. In terms of biological role, cell wall formation. Catalyzes the transfer of a GlcNAc subunit on undecaprenyl-pyrophosphoryl-MurNAc-pentapeptide (lipid intermediate I) to form undecaprenyl-pyrophosphoryl-MurNAc-(pentapeptide)GlcNAc (lipid intermediate II). The sequence is that of UDP-N-acetylglucosamine--N-acetylmuramyl-(pentapeptide) pyrophosphoryl-undecaprenol N-acetylglucosamine transferase from Acinetobacter baylyi (strain ATCC 33305 / BD413 / ADP1).